We begin with the raw amino-acid sequence, 171 residues long: MDELKNIIRDIPDFPKKGIIFKDITTLLADAASYQRMVDLLSHRYIGKKIDKVVGVEARGFIIGAALAYKLGAGIVLVRKPGKLPSETFKKSYELEYGTDTLEIHTDAIEKGERVLIADDLLATGGTMAAVVDMVSSMGAELVECCFMAELEFLNGKNKLPADKVFSLLKF.

Belongs to the purine/pyrimidine phosphoribosyltransferase family. In terms of assembly, homodimer.

The protein localises to the cytoplasm. The enzyme catalyses AMP + diphosphate = 5-phospho-alpha-D-ribose 1-diphosphate + adenine. The protein operates within purine metabolism; AMP biosynthesis via salvage pathway; AMP from adenine: step 1/1. Functionally, catalyzes a salvage reaction resulting in the formation of AMP, that is energically less costly than de novo synthesis. In Geotalea uraniireducens (strain Rf4) (Geobacter uraniireducens), this protein is Adenine phosphoribosyltransferase.